The primary structure comprises 153 residues: Aspartate carbamoyltransferase regulatory chain (153 aa).

Zn(2+) is bound by residues C110, C115, C138, and C141.

It belongs to the PyrI family. Contains catalytic and regulatory chains. Zn(2+) serves as cofactor.

Involved in allosteric regulation of aspartate carbamoyltransferase. This Bacteroides fragilis (strain ATCC 25285 / DSM 2151 / CCUG 4856 / JCM 11019 / LMG 10263 / NCTC 9343 / Onslow / VPI 2553 / EN-2) protein is Aspartate carbamoyltransferase regulatory chain.